The chain runs to 978 residues: MEQNGENHLKDPLLQADGGGSGASPAGASPRKERKTRKVMFNVRGISCASCAVSIETVVAGLKGVESVSVSPLQGQAVVQYRPEEADARTIKEAIEGLNFEVDELQEQEIAVCRLQIKGMACTSCSESVERALQMVPGVKKAAVGLALEEAKVHFDPNITSRDLIIEAIEDAGFGADLISSGDDVNKVHLKLEGVSSPEDIKLIQSRLESVEGVNNVECDTAGQTIIVAYDPDVTGPRLLIQCIQDAAQPPKYFNASLYSPPKQREAERHHEIRNYRNQFLWSCLFSVPVFMFSMVLPMISPFGDWLFYKVCNNMTIGMLLRWLLCSPVQFIIGWRFYVGAYHALKRGYSNMDVLVALGTNAAYFYSVYIVLKALTSESFEGQDFFETSAMLISFILLGKYLEVVAKGKTSDALSKLTELAPETACLLTLDKDGNAISETEISTQLLQRNDVIKIVPGEKVPVDGVVIKGQSHVNESMITGEARPIAKKPGDKVIGGTVNDNGCIIVKVTHVGSETALSQIVQLVEAAQLARAPVQKLADRISRFFVPTVVVAAFLTWLGWFVAGQFDIYPREWIPKAMDSFELALQFGISVLVVACPCALGLATPTAVMVATGKGASQGVLIKGGNALEKAHKVKAIIFDKTGTLTVGKPSVVQTKVFSKIPLLELCDLAAGAEANSEHPLSKAIVEYTKKLREQYGSHSDHIMESKDFEVHPGAGVSANVEGKLVLVGNKRLMQEFEVPISSEVEGHMSETEELARTCVLVAIDRTICGALSVSDPLKPEAGRAISYLSSMGISSIMVTGDNWATAKSIAKEVGIGTVFAEIDPVGKAEKIKDLQMKGLTVAMVGDGINDSPALAAADVGLAIGAGTDVAIEAADIVLMRSSLEDVITAIDLSRKTLSRIRLNYVWALGYNVLGMPVAAGVLFPFTGIRLPPWLAGACMAASSVSVVCSSLLLQLYKKPLHVEEVAAGPKNDPDLV.

A compositionally biased stretch (basic and acidic residues) spans 1-11; it reads MEQNGENHLKD. Residues 1-35 form a disordered region; sequence MEQNGENHLKDPLLQADGGGSGASPAGASPRKERK. HMA domains lie at 37–103, 111–177, and 186–252; these read RKVM…FEVD, AVCR…FGAD, and NKVH…QPPK. Cysteine 48, cysteine 51, cysteine 122, and cysteine 125 together coordinate Cu(+). A run of 8 helical transmembrane segments spans residues 280–300, 315–335, 352–372, 385–405, 545–565, 584–604, 907–927, and 935–955; these read FLWS…LPMI, MTIG…IIGW, MDVL…YIVL, FFET…LEVV, FFVP…FVAG, LALQ…LGLA, VWAL…LFPF, and WLAG…SLLL.

It belongs to the cation transport ATPase (P-type) (TC 3.A.3) family. Type IB subfamily. In terms of tissue distribution, highly expressed in roots. Expressed in vascular tissues of the stele, mainly in pericycle cells.

It is found in the vacuole membrane. It carries out the reaction Cu(+)(in) + ATP + H2O = Cu(+)(out) + ADP + phosphate + H(+). Functionally, copper (Cu) transporter that mediates Cu transport in root vacuoles. Involved in Cu detoxification by sequestrating Cu into root vacuoles and limiting translocation of Cu from the roots to the shoots, and accumulation in grains. This is Copper-transporting ATPase HMA4 from Oryza sativa subsp. japonica (Rice).